Here is a 259-residue protein sequence, read N- to C-terminus: Chloroplastic group IIB intron splicing facilitator CRS2, chloroplastic (259 aa).

The segment at 1 to 21 (MSLAVATPASARLSPLTTSSP) is disordered. Residues 1–49 (MSLAVATPASARLSPLTTSSPEPCRRRRLLLSAAAPLRRTRLRRRIAVV) constitute a chloroplast transit peptide. Residue Tyr-77 coordinates tRNA. The active-site Proton acceptor is His-82. The tRNA site is built by Tyr-127, Asn-129, and Asn-175.

It belongs to the PTH family. CRS2 subfamily. Part of large ribonucleo-protein complexes that include group IIB introns and either CAF1 or CAF2.

It is found in the plastid. The protein localises to the chloroplast stroma. Functionally, required for the splicing of group IIB introns in chloroplasts. The sequence is that of Chloroplastic group IIB intron splicing facilitator CRS2, chloroplastic from Oryza sativa subsp. japonica (Rice).